The chain runs to 203 residues: MAIVINKRNVRVLVITNLLLIVVFFVLRNSNASVNESITTHHPDSLVTFDNSGNAPGTHQSVHDTVNTQDKEAEEVDKNSGDAEFDAAAEYNKIMEQSPMIVFSKTGCPYSKKLKALLTNSYTFSPSYYVVELDRHEHTKELQDQIEKVTGRRTVPNVIIGGTSRGGYTEIAELHKNDELLDSFKKWSDGAFTVKANSQSESA.

The first 32 residues, 1-32, serve as a signal peptide directing secretion; the sequence is MAIVINKRNVRVLVITNLLLIVVFFVLRNSNA. Residues 88–191 enclose the Glutaredoxin domain; sequence AAEYNKIMEQ…DSFKKWSDGA (104 aa). [2Fe-2S] cluster is bound at residue C108.

This sequence belongs to the glutaredoxin family. Monothiol subfamily.

This Saccharomyces cerevisiae (strain ATCC 204508 / S288c) (Baker's yeast) protein is Monothiol glutaredoxin-7 (GRX7).